We begin with the raw amino-acid sequence, 342 residues long: tRNA N6-adenosine threonylcarbamoyltransferase (342 aa).

2 residues coordinate Fe cation: histidine 111 and histidine 115. Residues 134–138 (LVSGG), aspartate 167, glycine 180, and asparagine 272 contribute to the substrate site. Aspartate 300 provides a ligand contact to Fe cation.

The protein belongs to the KAE1 / TsaD family. The cofactor is Fe(2+).

It localises to the cytoplasm. The catalysed reaction is L-threonylcarbamoyladenylate + adenosine(37) in tRNA = N(6)-L-threonylcarbamoyladenosine(37) in tRNA + AMP + H(+). In terms of biological role, required for the formation of a threonylcarbamoyl group on adenosine at position 37 (t(6)A37) in tRNAs that read codons beginning with adenine. Is involved in the transfer of the threonylcarbamoyl moiety of threonylcarbamoyl-AMP (TC-AMP) to the N6 group of A37, together with TsaE and TsaB. TsaD likely plays a direct catalytic role in this reaction. The polypeptide is tRNA N6-adenosine threonylcarbamoyltransferase (Aromatoleum aromaticum (strain DSM 19018 / LMG 30748 / EbN1) (Azoarcus sp. (strain EbN1))).